A 260-amino-acid chain; its full sequence is UPF0294 protein YE0917 (260 aa).

This sequence belongs to the UPF0294 family.

Its subcellular location is the cytoplasm. This is UPF0294 protein YE0917 from Yersinia enterocolitica serotype O:8 / biotype 1B (strain NCTC 13174 / 8081).